Here is a 213-residue protein sequence, read N- to C-terminus: Ubiquitin-conjugating enzyme E2 S (213 aa).

The region spanning 13–159 (QIIRQVAKEV…ARMMTEIHAK (147 aa)) is the UBC core domain. Cys-97 functions as the Glycyl thioester intermediate in the catalytic mechanism. Residues 157 to 213 (HAKPTTKTAPTKNEETNCPSTSGTQSTSEGPMAKKHAGDKNAAEKKKKEKKRALRRL) form a disordered region. Positions 174–185 (CPSTSGTQSTSE) are enriched in polar residues. Over residues 192-202 (HAGDKNAAEKK) the composition is skewed to basic and acidic residues. A compositionally biased stretch (basic residues) spans 203–213 (KKEKKRALRRL).

This sequence belongs to the ubiquitin-conjugating enzyme family.

The catalysed reaction is S-ubiquitinyl-[E1 ubiquitin-activating enzyme]-L-cysteine + [E2 ubiquitin-conjugating enzyme]-L-cysteine = [E1 ubiquitin-activating enzyme]-L-cysteine + S-ubiquitinyl-[E2 ubiquitin-conjugating enzyme]-L-cysteine.. Its pathway is protein modification; protein ubiquitination. Its function is as follows. Catalyzes the covalent attachment of ubiquitin to other proteins. Acts as an essential factor of the anaphase promoting complex/cyclosome (APC/C), a cell cycle-regulated ubiquitin ligase that controls progression through mitosis. Acts by specifically elongating polyubiquitin chains initiated by the E2 enzyme UBCH10 on APC/C substrates, enhancing the degradation of APC/C substrates by the proteasome and promoting mitotic exit. The protein is Ubiquitin-conjugating enzyme E2 S of Branchiostoma floridae (Florida lancelet).